The chain runs to 326 residues: Triacylglycerol lipase 2 (326 aa).

Residues alanine 142–glycine 146 carry the (A/G)XSXG lipase motif motif.

As to quaternary structure, interacts with MIA40; forms mixed disulfide intermediates with MIA40.

The protein localises to the mitochondrion. It localises to the mitochondrion intermembrane space. It catalyses the reaction a triacylglycerol + H2O = a diacylglycerol + a fatty acid + H(+). It carries out the reaction 1,2,3-tri-(9Z-octadecenoyl)-glycerol + H2O = di-(9Z)-octadecenoylglycerol + (9Z)-octadecenoate + H(+). The catalysed reaction is 1,2,3-tributanoylglycerol + H2O = dibutanoylglycerol + butanoate + H(+). The enzyme catalyses 1,2,3-trioctanoylglycerol + H2O = dioctanoylglycerol + octanoate + H(+). It catalyses the reaction di-(9Z)-octadecenoylglycerol + H2O = (9Z-octadecenoyl)-glycerol + (9Z)-octadecenoate + H(+). It carries out the reaction dioctanoylglycerol + H2O = octanoylglycerol + octanoate + H(+). Mitochondrial triacylglycerol (TAG) lipase with activity toward long-chain diacylglycerols (DAGs) and triacylglycerols (TAGs). Involved in mitochondrial lipid metabolism. This chain is Triacylglycerol lipase 2 (TGL2), found in Saccharomyces cerevisiae (strain ATCC 204508 / S288c) (Baker's yeast).